The primary structure comprises 293 residues: 33 kDa chaperonin (293 aa).

Cystine bridges form between Cys236-Cys238 and Cys269-Cys272.

This sequence belongs to the HSP33 family. Post-translationally, under oxidizing conditions two disulfide bonds are formed involving the reactive cysteines. Under reducing conditions zinc is bound to the reactive cysteines and the protein is inactive.

It is found in the cytoplasm. Functionally, redox regulated molecular chaperone. Protects both thermally unfolding and oxidatively damaged proteins from irreversible aggregation. Plays an important role in the bacterial defense system toward oxidative stress. The sequence is that of 33 kDa chaperonin from Lactobacillus delbrueckii subsp. bulgaricus (strain ATCC 11842 / DSM 20081 / BCRC 10696 / JCM 1002 / NBRC 13953 / NCIMB 11778 / NCTC 12712 / WDCM 00102 / Lb 14).